The primary structure comprises 222 residues: Ribosomal RNA large subunit methyltransferase E (222 aa).

Residues Met-1–Lys-13 are compositionally biased toward basic and acidic residues. The interval Met-1–Ser-22 is disordered. The S-adenosyl-L-methionine site is built by Gly-75, Trp-77, Asp-94, Asp-110, and Asp-134. Lys-174 serves as the catalytic Proton acceptor.

This sequence belongs to the class I-like SAM-binding methyltransferase superfamily. RNA methyltransferase RlmE family.

It localises to the cytoplasm. It catalyses the reaction uridine(2552) in 23S rRNA + S-adenosyl-L-methionine = 2'-O-methyluridine(2552) in 23S rRNA + S-adenosyl-L-homocysteine + H(+). Specifically methylates the uridine in position 2552 of 23S rRNA at the 2'-O position of the ribose in the fully assembled 50S ribosomal subunit. The chain is Ribosomal RNA large subunit methyltransferase E from Novosphingobium aromaticivorans (strain ATCC 700278 / DSM 12444 / CCUG 56034 / CIP 105152 / NBRC 16084 / F199).